Consider the following 815-residue polypeptide: 1,4-alpha-glucan branching enzyme GlgB (815 aa).

Residue Asp-405 is the Nucleophile of the active site. The active-site Proton donor is Glu-458.

The protein belongs to the glycosyl hydrolase 13 family. GlgB subfamily. In terms of assembly, monomer.

The enzyme catalyses Transfers a segment of a (1-&gt;4)-alpha-D-glucan chain to a primary hydroxy group in a similar glucan chain.. It participates in glycan biosynthesis; glycogen biosynthesis. Its function is as follows. Catalyzes the formation of the alpha-1,6-glucosidic linkages in glycogen by scission of a 1,4-alpha-linked oligosaccharide from growing alpha-1,4-glucan chains and the subsequent attachment of the oligosaccharide to the alpha-1,6 position. The sequence is that of 1,4-alpha-glucan branching enzyme GlgB from Histophilus somni (strain 2336) (Haemophilus somnus).